A 333-amino-acid chain; its full sequence is 4-hydroxythreonine-4-phosphate dehydrogenase (333 aa).

Residues histidine 136 and threonine 137 each coordinate substrate. Residues histidine 166, histidine 211, and histidine 266 each contribute to the a divalent metal cation site. Substrate is bound by residues lysine 274, asparagine 283, and arginine 292.

This sequence belongs to the PdxA family. In terms of assembly, homodimer. Zn(2+) is required as a cofactor. Mg(2+) serves as cofactor. The cofactor is Co(2+).

It is found in the cytoplasm. The catalysed reaction is 4-(phosphooxy)-L-threonine + NAD(+) = 3-amino-2-oxopropyl phosphate + CO2 + NADH. It functions in the pathway cofactor biosynthesis; pyridoxine 5'-phosphate biosynthesis; pyridoxine 5'-phosphate from D-erythrose 4-phosphate: step 4/5. Catalyzes the NAD(P)-dependent oxidation of 4-(phosphooxy)-L-threonine (HTP) into 2-amino-3-oxo-4-(phosphooxy)butyric acid which spontaneously decarboxylates to form 3-amino-2-oxopropyl phosphate (AHAP). The protein is 4-hydroxythreonine-4-phosphate dehydrogenase of Acidithiobacillus ferrooxidans (strain ATCC 23270 / DSM 14882 / CIP 104768 / NCIMB 8455) (Ferrobacillus ferrooxidans (strain ATCC 23270)).